The sequence spans 250 residues: Ribosomal RNA small subunit methyltransferase J (250 aa).

Residues 96 to 97 (RD) and D168 each bind S-adenosyl-L-methionine.

Belongs to the methyltransferase superfamily. RsmJ family.

The protein localises to the cytoplasm. It catalyses the reaction guanosine(1516) in 16S rRNA + S-adenosyl-L-methionine = N(2)-methylguanosine(1516) in 16S rRNA + S-adenosyl-L-homocysteine + H(+). Specifically methylates the guanosine in position 1516 of 16S rRNA. This chain is Ribosomal RNA small subunit methyltransferase J, found in Neisseria gonorrhoeae (strain NCCP11945).